The following is a 329-amino-acid chain: Probable nicotianamine synthase 4 (329 aa).

Belongs to the nicotianamine synthase (NAS)-like family.

The enzyme catalyses 3 S-adenosyl-L-methionine = nicotianamine + 3 S-methyl-5'-thioadenosine + 3 H(+). Synthesizes nicotianamine, a polyamine that is the first intermediate in the synthesis of the phytosiderophores of the mugineic acid type found in gramineae which serves as a sensor for the physiological iron status within the plant, and/or might be involved in the transport of iron. The polypeptide is Probable nicotianamine synthase 4 (NAS4) (Hordeum vulgare (Barley)).